Here is a 499-residue protein sequence, read N- to C-terminus: Glucose-6-phosphate isomerase (499 aa).

E352 acts as the Proton donor in catalysis. Active-site residues include H383 and K487.

This sequence belongs to the GPI family.

The protein resides in the cytoplasm. It catalyses the reaction alpha-D-glucose 6-phosphate = beta-D-fructose 6-phosphate. It functions in the pathway carbohydrate biosynthesis; gluconeogenesis. Its pathway is carbohydrate degradation; glycolysis; D-glyceraldehyde 3-phosphate and glycerone phosphate from D-glucose: step 2/4. Functionally, catalyzes the reversible isomerization of glucose-6-phosphate to fructose-6-phosphate. This is Glucose-6-phosphate isomerase from Legionella pneumophila (strain Lens).